We begin with the raw amino-acid sequence, 313 residues long: DNA-directed RNA polymerase subunit alpha (313 aa).

An alpha N-terminal domain (alpha-NTD) region spans residues 1 to 226; sequence MLEIEKPKIE…EHMRLFLGLT (226 aa). The tract at residues 242-313 is alpha C-terminal domain (alpha-CTD); the sequence is TRDRLMDMSI…LGLSLRSSEE (72 aa).

The protein belongs to the RNA polymerase alpha chain family. Homodimer. The RNAP catalytic core consists of 2 alpha, 1 beta, 1 beta' and 1 omega subunit. When a sigma factor is associated with the core the holoenzyme is formed, which can initiate transcription.

It catalyses the reaction RNA(n) + a ribonucleoside 5'-triphosphate = RNA(n+1) + diphosphate. DNA-dependent RNA polymerase catalyzes the transcription of DNA into RNA using the four ribonucleoside triphosphates as substrates. The protein is DNA-directed RNA polymerase subunit alpha of Moorella thermoacetica (strain ATCC 39073 / JCM 9320).